We begin with the raw amino-acid sequence, 314 residues long: Porphobilinogen deaminase (314 aa).

The residue at position 243 (cysteine 243) is an S-(dipyrrolylmethanemethyl)cysteine.

It belongs to the HMBS family. Monomer. It depends on dipyrromethane as a cofactor.

It catalyses the reaction 4 porphobilinogen + H2O = hydroxymethylbilane + 4 NH4(+). Its pathway is porphyrin-containing compound metabolism; protoporphyrin-IX biosynthesis; coproporphyrinogen-III from 5-aminolevulinate: step 2/4. Functionally, tetrapolymerization of the monopyrrole PBG into the hydroxymethylbilane pre-uroporphyrinogen in several discrete steps. In Bordetella bronchiseptica (strain ATCC BAA-588 / NCTC 13252 / RB50) (Alcaligenes bronchisepticus), this protein is Porphobilinogen deaminase.